Consider the following 365-residue polypeptide: UDP-N-acetylglucosamine--N-acetylmuramyl-(pentapeptide) pyrophosphoryl-undecaprenol N-acetylglucosamine transferase (365 aa).

UDP-N-acetyl-alpha-D-glucosamine contacts are provided by residues 13–15 (TGG), N125, R165, S192, and Q293.

Belongs to the glycosyltransferase 28 family. MurG subfamily.

Its subcellular location is the cell inner membrane. The catalysed reaction is di-trans,octa-cis-undecaprenyl diphospho-N-acetyl-alpha-D-muramoyl-L-alanyl-D-glutamyl-meso-2,6-diaminopimeloyl-D-alanyl-D-alanine + UDP-N-acetyl-alpha-D-glucosamine = di-trans,octa-cis-undecaprenyl diphospho-[N-acetyl-alpha-D-glucosaminyl-(1-&gt;4)]-N-acetyl-alpha-D-muramoyl-L-alanyl-D-glutamyl-meso-2,6-diaminopimeloyl-D-alanyl-D-alanine + UDP + H(+). The protein operates within cell wall biogenesis; peptidoglycan biosynthesis. Cell wall formation. Catalyzes the transfer of a GlcNAc subunit on undecaprenyl-pyrophosphoryl-MurNAc-pentapeptide (lipid intermediate I) to form undecaprenyl-pyrophosphoryl-MurNAc-(pentapeptide)GlcNAc (lipid intermediate II). In Ruegeria pomeroyi (strain ATCC 700808 / DSM 15171 / DSS-3) (Silicibacter pomeroyi), this protein is UDP-N-acetylglucosamine--N-acetylmuramyl-(pentapeptide) pyrophosphoryl-undecaprenol N-acetylglucosamine transferase.